Here is a 120-residue protein sequence, read N- to C-terminus: MPTPKRRLGEVGEQAAAAYLERCGYTIIARNWRCRDGEIDLVAREGDQIVFVEVRTRHDQHALETITLAKQQRLVALAYHYLSAHDLPATTRWRIDVIALTARGGRIVDYDHVIAAVGED.

Belongs to the UPF0102 family.

The sequence is that of UPF0102 protein Caur_2698 from Chloroflexus aurantiacus (strain ATCC 29366 / DSM 635 / J-10-fl).